We begin with the raw amino-acid sequence, 202 residues long: Outer-membrane lipoprotein carrier protein (202 aa).

The signal sequence occupies residues 1–20; the sequence is MKKQLLIGSVLLVASSQVWA.

The protein belongs to the LolA family. In terms of assembly, monomer.

It localises to the periplasm. Its function is as follows. Participates in the translocation of lipoproteins from the inner membrane to the outer membrane. Only forms a complex with a lipoprotein if the residue after the N-terminal Cys is not an aspartate (The Asp acts as a targeting signal to indicate that the lipoprotein should stay in the inner membrane). This chain is Outer-membrane lipoprotein carrier protein, found in Aeromonas salmonicida (strain A449).